Consider the following 246-residue polypeptide: Small ribosomal subunit protein uS2 (246 aa).

This sequence belongs to the universal ribosomal protein uS2 family.

The chain is Small ribosomal subunit protein uS2 from Dictyoglomus thermophilum (strain ATCC 35947 / DSM 3960 / H-6-12).